We begin with the raw amino-acid sequence, 561 residues long: Putative transport protein YbjL (561 aa).

A run of 5 helical transmembrane segments spans residues leucine 8–glycine 28, leucine 32–glutamine 52, phenylalanine 66–phenylalanine 86, methionine 94–phenylalanine 114, and asparagine 158–alanine 178. 2 consecutive RCK C-terminal domains span residues arginine 200–asparagine 288 and valine 292–phenylalanine 373. The next 5 membrane-spanning stretches (helical) occupy residues leucine 383 to phenylalanine 403, phenylalanine 406 to leucine 426, phenylalanine 447 to glycine 467, methionine 475 to alanine 495, and alanine 540 to leucine 560.

The protein belongs to the AAE transporter (TC 2.A.81) family. YbjL subfamily.

Its subcellular location is the cell membrane. This chain is Putative transport protein YbjL, found in Salmonella arizonae (strain ATCC BAA-731 / CDC346-86 / RSK2980).